The chain runs to 170 residues: Acetyl-CoA decarbonylase/synthase complex subunit epsilon 1 (170 aa).

The protein belongs to the CdhB family. As to quaternary structure, heterotetramer of two alpha and two epsilon subunits. The ACDS complex is made up of alpha, epsilon, beta, gamma and delta subunits with a probable stoichiometry of (alpha(2)epsilon(2))(4)-beta(8)-(gamma(1)delta(1))(8).

It functions in the pathway one-carbon metabolism; methanogenesis from acetate. Part of a complex that catalyzes the reversible cleavage of acetyl-CoA, allowing growth on acetate as sole source of carbon and energy. The alpha-epsilon subcomponent functions as a carbon monoxide dehydrogenase. The precise role of the epsilon subunit is unclear; it may have a stabilizing role within the alpha(2)epsilon(2) component and/or be involved in electron transfer to FAD during a potential FAD-mediated CO oxidation. The sequence is that of Acetyl-CoA decarbonylase/synthase complex subunit epsilon 1 (cdhB1) from Methanosarcina mazei (strain ATCC BAA-159 / DSM 3647 / Goe1 / Go1 / JCM 11833 / OCM 88) (Methanosarcina frisia).